The chain runs to 733 residues: Ribosomal protein S6 kinase alpha-2 (733 aa).

The Protein kinase 1 domain maps to 59–318 (FELLKVLGQG…VEEIKRHPFF (260 aa)). Residues 65–73 (LGQGSYGKV) and K91 each bind ATP. Residue D184 is the Proton acceptor of the active site. S218 is subject to Phosphoserine; by PDPK1. In terms of domain architecture, AGC-kinase C-terminal spans 319–388 (VTIDWNKLYR…VASSLVQEPS (70 aa)). S377 bears the Phosphoserine mark. One can recognise a Protein kinase 2 domain in the interval 415-672 (YEIKEDIGVG…AVQVLKHPWI (258 aa)). ATP-binding positions include 421–429 (IGVGSYSVC) and K444. D532 functions as the Proton acceptor in the catalytic mechanism.

It belongs to the protein kinase superfamily. AGC Ser/Thr protein kinase family. S6 kinase subfamily. As to quaternary structure, forms a complex with either MAPK1/ERK2 or MAPK3/ERK1 in quiescent cells. Transiently dissociates following mitogenic stimulation. Interacts with FBXO5; cooperate to induce the metaphase arrest of early blastomeres; increases and stabilizes interaction of FBXO5 with CDC20. Mg(2+) serves as cofactor. Post-translationally, activated by phosphorylation at Ser-218 by PDPK1. Autophosphorylated on Ser-377, as part of the activation process. May be phosphorylated at Thr-356 and Ser-360 by MAPK1/ERK2 and MAPK3/ERK1. In terms of processing, N-terminal myristoylation results in an activated kinase in the absence of added growth factors.

It localises to the nucleus. Its subcellular location is the cytoplasm. The catalysed reaction is L-seryl-[protein] + ATP = O-phospho-L-seryl-[protein] + ADP + H(+). It catalyses the reaction L-threonyl-[protein] + ATP = O-phospho-L-threonyl-[protein] + ADP + H(+). Upon extracellular signal or mitogen stimulation, phosphorylated at Thr-570 in the C-terminal kinase domain (CTKD) by MAPK1/ERK2 and MAPK3/ERK1. The activated CTKD then autophosphorylates Ser-377, allowing binding of PDPK1, which in turn phosphorylates Ser-218 in the N-terminal kinase domain (NTDK) leading to the full activation of the protein and subsequent phosphorylation of the substrates by the NTKD. In terms of biological role, serine/threonine-protein kinase that acts downstream of ERK (MAPK1/ERK2 and MAPK3/ERK1) signaling and mediates mitogenic and stress-induced activation of transcription factors, regulates translation, and mediates cellular proliferation, survival, and differentiation. May function as tumor suppressor in epithelial ovarian cancer cells. The chain is Ribosomal protein S6 kinase alpha-2 (Rps6ka2) from Mus musculus (Mouse).